The sequence spans 141 residues: Protein nfe1 (141 aa).

To the N-terminal of nitrogenase iron protein (NifH). Has lost the ATP-binding site.

Responsible for the nodulation efficiency and competitive ability of strain GR4 on alfalfa roots. The chain is Protein nfe1 (nfe1) from Rhizobium meliloti (Ensifer meliloti).